Reading from the N-terminus, the 99-residue chain is Signal recognition particle 19 kDa protein (99 aa).

It belongs to the SRP19 family. In terms of assembly, part of the signal recognition particle protein translocation system, which is composed of SRP and FtsY. Archaeal SRP consists of a 7S RNA molecule of 300 nucleotides and two protein subunits: SRP54 and SRP19.

The protein resides in the cytoplasm. Its function is as follows. Involved in targeting and insertion of nascent membrane proteins into the cytoplasmic membrane. Binds directly to 7S RNA and mediates binding of the 54 kDa subunit of the SRP. This Pyrococcus horikoshii (strain ATCC 700860 / DSM 12428 / JCM 9974 / NBRC 100139 / OT-3) protein is Signal recognition particle 19 kDa protein.